A 473-amino-acid chain; its full sequence is Proline--tRNA ligase (473 aa).

Belongs to the class-II aminoacyl-tRNA synthetase family. ProS type 3 subfamily. As to quaternary structure, homodimer.

It localises to the cytoplasm. The catalysed reaction is tRNA(Pro) + L-proline + ATP = L-prolyl-tRNA(Pro) + AMP + diphosphate. Its function is as follows. Catalyzes the attachment of proline to tRNA(Pro) in a two-step reaction: proline is first activated by ATP to form Pro-AMP and then transferred to the acceptor end of tRNA(Pro). In Mesoplasma florum (strain ATCC 33453 / NBRC 100688 / NCTC 11704 / L1) (Acholeplasma florum), this protein is Proline--tRNA ligase.